The sequence spans 269 residues: 5'-nucleotidase SurE (269 aa).

4 residues coordinate a divalent metal cation: Asp-11, Asp-12, Ser-43, and Asn-101.

It belongs to the SurE nucleotidase family. It depends on a divalent metal cation as a cofactor.

The protein resides in the cytoplasm. It catalyses the reaction a ribonucleoside 5'-phosphate + H2O = a ribonucleoside + phosphate. Functionally, nucleotidase that shows phosphatase activity on nucleoside 5'-monophosphates. The polypeptide is 5'-nucleotidase SurE (Prochlorococcus marinus (strain MIT 9303)).